The following is a 121-amino-acid chain: Histone H2B (121 aa).

The segment at 1–27 (MAPKKAPAAAEKKVKKAPTTEKKNKKK) is disordered. Ala2 bears the N,N,N-trimethylalanine mark. Lys5 and Lys41 each carry N6-acetyllysine. Lys115 is covalently cross-linked (Glycyl lysine isopeptide (Lys-Gly) (interchain with G-Cter in ubiquitin)).

It belongs to the histone H2B family. The nucleosome is a histone octamer containing two molecules each of H2A, H2B, H3 and H4 assembled in one H3-H4 heterotetramer and two H2A-H2B heterodimers. The octamer wraps approximately 147 bp of DNA. In terms of processing, monoubiquitination of Lys-115 gives a specific tag for epigenetic transcriptional activation and is also prerequisite for histone H3 'Lys-4' and 'Lys-79' methylation. Acetylation occurs almost exclusively in the MAC.

The protein localises to the nucleus. It is found in the chromosome. In terms of biological role, core component of nucleosome. Nucleosomes wrap and compact DNA into chromatin, limiting DNA accessibility to the cellular machineries which require DNA as a template. Histones thereby play a central role in transcription regulation, DNA repair, DNA replication and chromosomal stability. DNA accessibility is regulated via a complex set of post-translational modifications of histones, also called histone code, and nucleosome remodeling. The protein is Histone H2B of Tetrahymena pyriformis.